We begin with the raw amino-acid sequence, 460 residues long: MADLTPVQVLPADIGILNFANIGSDSLAECNRLLDKNHRDHHMFVRDTAGHNHIVHAVLAVLALGGSPQELRDRYDDGASMQRPLPPCDAELLEKLNDPEVFMATLSERAQYTTFLTFFERKMAERGWRSVLQEYLFARTPLADAMLGRLYEGAYHALIHLGYGIEFQSPAIIAEALGQAASHDDSGIAQLFRSAEEEAVFQYPTPRGTPLIELVHEVRANDQIRTAPRWSDYGNKMRDGIVGRACEPMSTLASQFQIFPNEADLERRTAEMIGVCAYMSGAAQRPGRKRKIDFFHMHALNSALFFTVLIRQQWIRLEDRVRMVERKARLDLAWYAVAGSAALDATAITDYSSPESDGLGWDELFAAVNKEHDDGHAAKFIRALKNGEMVSRRYEQGEWAEFFPMKGDMWLKLARMCQDTTKGMPSDLKWIPFTGFEQPWKRADLAEAGETNTAEKVRLY.

Belongs to the questin oxidase family. Requires NADPH as cofactor.

The protein operates within secondary metabolite biosynthesis. Its function is as follows. Baeyer-Villiger oxidase; part of the gene cluster that mediates the biosynthesis of agnestins, dihydroxy-xanthone metabolites. The pathway begins with the assembly and cyclization of atrochrysone thioester by the non-reducing polyketide synthase Agnpks1. The atrochrysone carboxyl ACP thioesterase AgnL7 then breaks the thioester bond and releases the atrochrysone carboxylic acid as the first enzyme-free intermediate. The decarboxylase AgnL1 then catalyzes the concerted decarboxylation-elimination required to convert atochrysone carboxylic acid into emodin anthrone, which is further oxidized to emodin by the anthrone oxygenase AgnL2. Emodin then undergoes reduction catalyzed by the oxidoreductase AgnL4 to yield the dihydroquinone tautomer which is the substrate for reduction by the short chain dehydrogenase AgnL6 reduction to produce hydroxyketone, followed by AgnL8 dehydration and likely spontaneous autoxidation to chrysophanol. Baeyer-Villiger oxidation by the oxidase AgnL3 leads to monodictyphenone via cleavage of the C-10/C-10a bond of chrysophanol. Alternative cleavage at the C-4a/C-10 bond of chrysophanol also leads to the formation some cephalone F. Further conversion to agnestins A and B, requires reduction to dihydro-monodictyphenone, oxidation to agnestin C probably via an epoxide, and rearrangement to either agnestin A or agnestin B directly, although agnestin A or agnestin B can also interconvert. Within the cluster, AgnR1 is the only unassigned oxidoreductase present which could be involved in this conversion. However, AgnR1 seems not to be involved in this step, and thus genes involved in the proposed oxidation/reduction may be located elsewhere on the genome. Further agnestin A derivatives are probably formed by spontaneous decarboxylations, dehydrations and methanolysis reactions. The polypeptide is Baeyer-Villiger oxidase AgnL3 (Paecilomyces divaricatus (Penicillium divaricatum)).